A 91-amino-acid chain; its full sequence is UPF0512 protein E (91 aa).

Over residues 1–25 (MAIFKSISSISNSTSAMGSSNSTSN) the composition is skewed to low complexity. The disordered stretch occupies residues 1 to 26 (MAIFKSISSISNSTSAMGSSNSTSNR).

The protein belongs to the UPF0512 family.

This is UPF0512 protein E from Dictyostelium discoideum (Social amoeba).